The chain runs to 414 residues: Esterase FrsA (414 aa).

It belongs to the FrsA family.

The enzyme catalyses a carboxylic ester + H2O = an alcohol + a carboxylate + H(+). Catalyzes the hydrolysis of esters. This Salmonella dublin (strain CT_02021853) protein is Esterase FrsA.